Reading from the N-terminus, the 1020-residue chain is Glucan endo-1,3-beta-D-glucosidase (1020 aa).

Residues 1-25 (MKGKNVQLLFALVVIILLFPTGASA) form the signal peptide. The tract at residues 28–251 (HAVSVGKGSY…ADYIAIAKLP (224 aa)) is beta-sandwich subdomain. The GH81 domain occupies 28-722 (HAVSVGKGSY…HWIHNLAELG (695 aa)). The segment at 252 to 350 (EKDGNMLAKF…EGKRFTTELT (99 aa)) is alpha/beta subdomain. The (alpha/beta)6 barrel subdomain stretch occupies residues 360–722 (DLGDYDRERL…HWIHNLAELG (363 aa)). (1,3-beta-D-glucosyl)n is bound by residues tyrosine 387, lysine 391, histidine 458, aspartate 466, histidine 470, aspartate 530, asparagine 540, glutamate 542, glutamate 546, glutamate 699, and arginine 704. Aspartate 466 is a catalytic residue. Catalysis depends on residues glutamate 542 and glutamate 546. The interval 771 to 790 (HSFNIGNGDGPTNPDPSEPD) is disordered. The CBM6 domain maps to 796–922 (ERIQAEAYDA…LMNVNWFVFR (127 aa)). (1,3-beta-D-glucosyl)n-binding residues include glutamate 812, tryptophan 825, aspartate 853, asparagine 878, aspartate 912, and asparagine 915. Residues 928 to 1020 (NGDSHTHPDY…YTTEWFTYSR (93 aa)) enclose the CBM56 domain.

Belongs to the glycosyl hydrolase 81 family.

The protein localises to the secreted. The enzyme catalyses Hydrolysis of (1-&gt;3)-beta-D-glucosidic linkages in (1-&gt;3)-beta-D-glucans.. Its function is as follows. Cleaves internal linkages in 1,3-beta-glucan. May contribute to plant biomass degradation. In Halalkalibacterium halodurans (strain ATCC BAA-125 / DSM 18197 / FERM 7344 / JCM 9153 / C-125) (Bacillus halodurans), this protein is Glucan endo-1,3-beta-D-glucosidase.